The chain runs to 133 residues: S-adenosylmethionine decarboxylase proenzyme (133 aa).

The active-site Schiff-base intermediate with substrate; via pyruvic acid is serine 64. A Pyruvic acid (Ser); by autocatalysis modification is found at serine 64. The active-site Proton acceptor; for processing activity is the histidine 69. Cysteine 84 acts as the Proton donor; for catalytic activity in catalysis.

This sequence belongs to the prokaryotic AdoMetDC family. Type 1 subfamily. In terms of assembly, heterotetramer of two alpha and two beta chains arranged as a dimer of alpha/beta heterodimers. It depends on pyruvate as a cofactor. Is synthesized initially as an inactive proenzyme. Formation of the active enzyme involves a self-maturation process in which the active site pyruvoyl group is generated from an internal serine residue via an autocatalytic post-translational modification. Two non-identical subunits are generated from the proenzyme in this reaction, and the pyruvate is formed at the N-terminus of the alpha chain, which is derived from the carboxyl end of the proenzyme. The post-translation cleavage follows an unusual pathway, termed non-hydrolytic serinolysis, in which the side chain hydroxyl group of the serine supplies its oxygen atom to form the C-terminus of the beta chain, while the remainder of the serine residue undergoes an oxidative deamination to produce ammonia and the pyruvoyl group blocking the N-terminus of the alpha chain.

The catalysed reaction is S-adenosyl-L-methionine + H(+) = S-adenosyl 3-(methylsulfanyl)propylamine + CO2. It functions in the pathway amine and polyamine biosynthesis; S-adenosylmethioninamine biosynthesis; S-adenosylmethioninamine from S-adenosyl-L-methionine: step 1/1. Functionally, catalyzes the decarboxylation of S-adenosylmethionine to S-adenosylmethioninamine (dcAdoMet), the propylamine donor required for the synthesis of the polyamines spermine and spermidine from the diamine putrescine. This chain is S-adenosylmethionine decarboxylase proenzyme, found in Sulfurihydrogenibium sp. (strain YO3AOP1).